The following is a 162-amino-acid chain: NADH-quinone oxidoreductase subunit I 1 (162 aa).

2 4Fe-4S ferredoxin-type domains span residues 44–74 (LRTY…VQAA) and 90–119 (YKYQ…LTQE). [4Fe-4S] cluster is bound by residues Cys54, Cys57, Cys60, Cys64, Cys99, Cys102, Cys105, and Cys109.

The protein belongs to the complex I 23 kDa subunit family. NDH-1 is composed of 14 different subunits. Subunits NuoA, H, J, K, L, M, N constitute the membrane sector of the complex. [4Fe-4S] cluster is required as a cofactor.

Its subcellular location is the cell membrane. The enzyme catalyses a quinone + NADH + 5 H(+)(in) = a quinol + NAD(+) + 4 H(+)(out). NDH-1 shuttles electrons from NADH, via FMN and iron-sulfur (Fe-S) centers, to quinones in the respiratory chain. The immediate electron acceptor for the enzyme in this species is believed to be ubiquinone. Couples the redox reaction to proton translocation (for every two electrons transferred, four hydrogen ions are translocated across the cytoplasmic membrane), and thus conserves the redox energy in a proton gradient. In Symbiobacterium thermophilum (strain DSM 24528 / JCM 14929 / IAM 14863 / T), this protein is NADH-quinone oxidoreductase subunit I 1.